The following is a 659-amino-acid chain: Pro-secreted protein ORF2 (659 aa).

Residues 1 to 23 form the signal peptide; it reads MRPRPLLLLFLLFLPMLPAPPTG. 2 disordered regions span residues 19–43 and 64–107; these read APPT…GFWG and PDVA…TAGA. The Nuclear localization signal motif lies at 28–33; that stretch reads RRRGRR. Over residues 92-107 the composition is skewed to low complexity; the sequence is QRPSAASRRRPATAGA. N-linked (GlcNAc...) asparagine; by host glycans are attached at residues Asn-137 and Asn-310. The segment at 367-393 is particle formation; the sequence is IALTLLNLADTLLGGLPTELISSAGGQ. The N-linked (GlcNAc...) asparagine; by host glycan is linked to Asn-561. An oligomerization region spans residues 584 to 609; that stretch reads TTRLGAGPVAISAAAVLAPRSALALL.

This sequence belongs to the hepevirus capsid protein family. As to quaternary structure, homodimer. In terms of assembly, self-assembles to form the capsid. The capsid is dominated by dimers that define the 30 morphological units. Interacts with phosphorylated protein ORF3. Interacts with host TMEM134. Interacts with host ASGR1 and ASGR2; these interactions facilitate infection of host hepatocytes. In terms of processing, cleaved by host protease in the N-terminus. N-glycosylated. Post-translationally, not N-glycosylated. The C-terminus of the capsid protein ORF2 is truncated in non-enveloped virions shedded in feces, probably due to host proteases.

It localises to the secreted. Its subcellular location is the virion. The protein resides in the host cytoplasm. The protein localises to the host endoplasmic reticulum. It is found in the host Golgi apparatus. It localises to the host cell surface. Its subcellular location is the host nucleus. Its function is as follows. Plays a role in the inhibition of host antibody-mediated neutralization without blocking viral cell entry. Forms an icosahedral capsid with a T=1 symmetry and a 34 nm diameter. The capsid is composed of 60 copies linked to each other. Binds to the 5' end of the genomic RNA to mediate genome encapsidation. Binds to heparin surface proteoglycans (HSPGs) to mediate viral entry. Additionally, the interactions with host ASGR1 and ASGR2 facilitate viral infection of hepatocytes. Inhibits IFN production by blocking host TBK1-induced IRF3 phosphorylation. The nuclear form probably modulates host gene expression. The chain is Pro-secreted protein ORF2 from Bandicota bengalensis (lesser bandicoot rat).